The following is a 416-amino-acid chain: 46 kDa surface antigen (416 aa).

The first 27 residues, 1–27 (MLRKKFLYSSAIYATSLASIIAFVAAG), serve as a signal peptide directing secretion. A lipid anchor (N-palmitoyl cysteine) is attached at Cys-28. Residue Cys-28 is the site of S-diacylglycerol cysteine attachment.

The protein resides in the cell membrane. In Mesomycoplasma hyopneumoniae (strain 232) (Mycoplasma hyopneumoniae), this protein is 46 kDa surface antigen (p46).